The primary structure comprises 1377 residues: DNA-directed RNA polymerase subunit beta (1377 aa).

It belongs to the RNA polymerase beta chain family. The RNAP catalytic core consists of 2 alpha, 1 beta, 1 beta' and 1 omega subunit. When a sigma factor is associated with the core the holoenzyme is formed, which can initiate transcription.

It carries out the reaction RNA(n) + a ribonucleoside 5'-triphosphate = RNA(n+1) + diphosphate. In terms of biological role, DNA-dependent RNA polymerase catalyzes the transcription of DNA into RNA using the four ribonucleoside triphosphates as substrates. The sequence is that of DNA-directed RNA polymerase subunit beta from Campylobacter lari (strain RM2100 / D67 / ATCC BAA-1060).